We begin with the raw amino-acid sequence, 403 residues long: Phosphoglycerate kinase (403 aa).

Substrate contacts are provided by residues 22–24, arginine 37, 60–63, arginine 119, and arginine 156; these read DLN and HLGR. Residues lysine 206, glycine 302, glutamate 333, and 359–362 contribute to the ATP site; that span reads GGDS.

It belongs to the phosphoglycerate kinase family. As to quaternary structure, monomer.

The protein resides in the cytoplasm. The catalysed reaction is (2R)-3-phosphoglycerate + ATP = (2R)-3-phospho-glyceroyl phosphate + ADP. Its pathway is carbohydrate degradation; glycolysis; pyruvate from D-glyceraldehyde 3-phosphate: step 2/5. The chain is Phosphoglycerate kinase (pgk) from Streptomyces coelicolor (strain ATCC BAA-471 / A3(2) / M145).